We begin with the raw amino-acid sequence, 321 residues long: Glutathione synthetase (321 aa).

The region spanning 125–311 (EKLFTGWFPH…IAGQFIAFLE (187 aa)) is the ATP-grasp domain. 151–208 (FIREQKEVVIKPLGAMAGESIFYLTVNDPNIPVVIETMTANGHQLVMAQRFIPEVKSG) contacts ATP. Residues Glu-282 and Asn-284 each coordinate Mg(2+).

Belongs to the prokaryotic GSH synthase family. The cofactor is Mg(2+). Requires Mn(2+) as cofactor.

The enzyme catalyses gamma-L-glutamyl-L-cysteine + glycine + ATP = glutathione + ADP + phosphate + H(+). The protein operates within sulfur metabolism; glutathione biosynthesis; glutathione from L-cysteine and L-glutamate: step 2/2. The polypeptide is Glutathione synthetase (Coxiella burnetii (strain RSA 493 / Nine Mile phase I)).